Here is an 829-residue protein sequence, read N- to C-terminus: Potassium voltage-gated channel unc-103 (829 aa).

The interval methionine 1–threonine 76 is disordered. Over methionine 1–tryptophan 123 the chain is Cytoplasmic. The segment covering glycine 46–glycine 66 has biased composition (gly residues). Residues isoleucine 124–leucine 144 form a helical membrane-spanning segment. Residues arginine 145–glutamate 158 are Extracellular-facing. The chain crosses the membrane as a helical span at residues proline 159–phenylalanine 179. Over arginine 180–histidine 203 the chain is Cytoplasmic. Residues tyrosine 204–valine 224 form a helical membrane-spanning segment. At serine 225–leucine 234 the chain is on the extracellular side. A helical; Voltage-sensor transmembrane segment spans residues isoleucine 235–arginine 255. At tyrosine 256–alanine 261 the chain is on the cytoplasmic side. The chain crosses the membrane as a helical span at residues alanine 262–tryptophan 282. Topologically, residues tyrosine 283–tyrosine 327 are extracellular. Asparagine 313 carries an N-linked (GlcNAc...) asparagine glycan. The segment at residues valine 328 to alanine 348 is an intramembrane region (pore-forming). The Extracellular portion of the chain corresponds to threonine 349–lysine 354. The chain crosses the membrane as a helical span at residues isoleucine 355–valine 375. Residues serine 376–leucine 829 are Cytoplasmic-facing. A nucleoside 3',5'-cyclic phosphate is bound at residue alanine 458–leucine 559. Residues serine 601–histidine 674 form a disordered region. Positions asparagine 603–histidine 615 are enriched in basic and acidic residues. The segment covering serine 640–serine 650 has biased composition (low complexity).

It belongs to the potassium channel family. H (Eag) (TC 1.A.1.20) subfamily. Kv11.1/KCNH2 sub-subfamily. As to quaternary structure, the potassium channel is composed of a homo- or heterotetrameric complex. Interacts with dnj-1; dnj-1 chaperone promotes tetramerization.

The protein resides in the cell membrane. In terms of biological role, pore-forming (alpha) subunit of voltage-gated inwardly rectifying potassium channel. Channel properties are modulated by cAMP and subunit assembly. Regulates the movements of the male's copulatory spicules before and during male mating behavior. The polypeptide is Potassium voltage-gated channel unc-103 (Caenorhabditis elegans).